The sequence spans 152 residues: Single-stranded DNA-binding protein, mitochondrial (152 aa).

A mitochondrion-targeting transit peptide spans 1-16 (MFRRPVLQVFRQFVRH). The 112-residue stretch at 30 to 141 (LNRVQLLGRV…IIAGKKLVVH (112 aa)) folds into the SSB domain. S67 and S79 each carry phosphoserine. K113 bears the N6-acetyllysine mark. K122 carries the post-translational modification N6-succinyllysine.

Homotetramer. Interacts with MPG/AAG, through inhibition of its glycosylase activity it potentially prevents formation of DNA breaks in ssDNA, ensuring that base removal primarily occurs in dsDNA. Interacts with POLDIP2. Interacts with PRIMPOL. Expressed in all the layers of the retina (at protein level).

The protein localises to the mitochondrion. It is found in the mitochondrion matrix. Its subcellular location is the mitochondrion nucleoid. Its function is as follows. Binds preferentially and cooperatively to pyrimidine rich single-stranded DNA (ss-DNA). In vitro, required to maintain the copy number of mitochondrial DNA (mtDNA) and plays a crucial role during mtDNA replication by stimulating the activity of the replisome components POLG and TWNK at the replication fork. Promotes the activity of the gamma complex polymerase POLG, largely by organizing the template DNA and eliminating secondary structures to favor ss-DNA conformations that facilitate POLG activity. In addition it is able to promote the 5'-3' unwinding activity of the mtDNA helicase TWNK. May also function in mtDNA repair. This is Single-stranded DNA-binding protein, mitochondrial (Ssbp1) from Mus musculus (Mouse).